The primary structure comprises 342 residues: S-adenosylmethionine:tRNA ribosyltransferase-isomerase (342 aa).

This sequence belongs to the QueA family. In terms of assembly, monomer.

Its subcellular location is the cytoplasm. It catalyses the reaction 7-aminomethyl-7-carbaguanosine(34) in tRNA + S-adenosyl-L-methionine = epoxyqueuosine(34) in tRNA + adenine + L-methionine + 2 H(+). It functions in the pathway tRNA modification; tRNA-queuosine biosynthesis. Its function is as follows. Transfers and isomerizes the ribose moiety from AdoMet to the 7-aminomethyl group of 7-deazaguanine (preQ1-tRNA) to give epoxyqueuosine (oQ-tRNA). The protein is S-adenosylmethionine:tRNA ribosyltransferase-isomerase of Listeria monocytogenes serotype 4a (strain HCC23).